The primary structure comprises 179 residues: Large ribosomal subunit protein uL6 (179 aa).

The protein belongs to the universal ribosomal protein uL6 family. In terms of assembly, part of the 50S ribosomal subunit.

Functionally, this protein binds to the 23S rRNA, and is important in its secondary structure. It is located near the subunit interface in the base of the L7/L12 stalk, and near the tRNA binding site of the peptidyltransferase center. This is Large ribosomal subunit protein uL6 from Chlorobium phaeovibrioides (strain DSM 265 / 1930) (Prosthecochloris vibrioformis (strain DSM 265)).